The sequence spans 190 residues: Potassium-transporting ATPase KdpC subunit (190 aa).

A helical membrane pass occupies residues 11–31; sequence LIVLMSLITGVAYPLVVTGVA.

The protein belongs to the KdpC family. In terms of assembly, the system is composed of three essential subunits: KdpA, KdpB and KdpC.

The protein localises to the cell inner membrane. Part of the high-affinity ATP-driven potassium transport (or Kdp) system, which catalyzes the hydrolysis of ATP coupled with the electrogenic transport of potassium into the cytoplasm. This subunit acts as a catalytic chaperone that increases the ATP-binding affinity of the ATP-hydrolyzing subunit KdpB by the formation of a transient KdpB/KdpC/ATP ternary complex. The polypeptide is Potassium-transporting ATPase KdpC subunit (Pseudomonas savastanoi pv. phaseolicola (strain 1448A / Race 6) (Pseudomonas syringae pv. phaseolicola (strain 1448A / Race 6))).